We begin with the raw amino-acid sequence, 206 residues long: Large ribosomal subunit protein mL40 (206 aa).

Residues 1-46 constitute a mitochondrion transit peptide; it reads MATGVMLCAARALRPRSWIPGTCQAHVRHTHQRASLLAFWDLIPMR. Residues 170-189 form a disordered region; the sequence is PFEKEGPHYTPPISNYQAPE.

The protein belongs to the mitochondrion-specific ribosomal protein mL40 family. Component of the mitochondrial ribosome large subunit (39S) which comprises a 16S rRNA and about 50 distinct proteins. In terms of tissue distribution, ubiquitous.

The protein localises to the mitochondrion. In Mus musculus (Mouse), this protein is Large ribosomal subunit protein mL40 (Mrpl40).